We begin with the raw amino-acid sequence, 324 residues long: Beta-ketoacyl-[acyl-carrier-protein] synthase III (324 aa).

Catalysis depends on residues C114 and H251. Residues 252–256 (QANQR) form an ACP-binding region. Residue N281 is part of the active site.

Belongs to the thiolase-like superfamily. FabH family. In terms of assembly, homodimer.

Its subcellular location is the cytoplasm. It carries out the reaction malonyl-[ACP] + acetyl-CoA + H(+) = 3-oxobutanoyl-[ACP] + CO2 + CoA. The protein operates within lipid metabolism; fatty acid biosynthesis. Catalyzes the condensation reaction of fatty acid synthesis by the addition to an acyl acceptor of two carbons from malonyl-ACP. Catalyzes the first condensation reaction which initiates fatty acid synthesis and may therefore play a role in governing the total rate of fatty acid production. Possesses both acetoacetyl-ACP synthase and acetyl transacylase activities. Its substrate specificity determines the biosynthesis of branched-chain and/or straight-chain of fatty acids. The polypeptide is Beta-ketoacyl-[acyl-carrier-protein] synthase III (Rhodospirillum rubrum (strain ATCC 11170 / ATH 1.1.1 / DSM 467 / LMG 4362 / NCIMB 8255 / S1)).